The primary structure comprises 1402 residues: DNA-directed RNA polymerase subunit beta' (1402 aa).

Zn(2+)-binding residues include Cys-71, Cys-73, Cys-86, and Cys-89. The Mg(2+) site is built by Asp-462, Asp-464, and Asp-466. Zn(2+) is bound by residues Cys-811, Cys-885, Cys-892, and Cys-895.

The protein belongs to the RNA polymerase beta' chain family. The RNAP catalytic core consists of 2 alpha, 1 beta, 1 beta' and 1 omega subunit. When a sigma factor is associated with the core the holoenzyme is formed, which can initiate transcription. Mg(2+) serves as cofactor. The cofactor is Zn(2+).

It carries out the reaction RNA(n) + a ribonucleoside 5'-triphosphate = RNA(n+1) + diphosphate. Functionally, DNA-dependent RNA polymerase catalyzes the transcription of DNA into RNA using the four ribonucleoside triphosphates as substrates. In Rhizobium etli (strain ATCC 51251 / DSM 11541 / JCM 21823 / NBRC 15573 / CFN 42), this protein is DNA-directed RNA polymerase subunit beta'.